Here is a 506-residue protein sequence, read N- to C-terminus: Radiation-sensitive protein 28 (506 aa).

5 WD repeats span residues 55–94 (PLSI…HRND), 193–233 (HHKY…AVQD), 285–325 (RMQS…RLYS), 357–396 (AHLR…LQPE), and 404–451 (LGTQ…LWNK).

It localises to the nucleus. Involved in transcription-coupled repair nucleotide excision repair (NER) of UV-induced DNA lesions. This chain is Radiation-sensitive protein 28 (RAD28), found in Saccharomyces cerevisiae (strain ATCC 204508 / S288c) (Baker's yeast).